The chain runs to 223 residues: Endonuclease V (223 aa).

Residues aspartate 35 and aspartate 103 each contribute to the Mg(2+) site.

Belongs to the endonuclease V family. The cofactor is Mg(2+).

The protein resides in the cytoplasm. It carries out the reaction Endonucleolytic cleavage at apurinic or apyrimidinic sites to products with a 5'-phosphate.. Functionally, DNA repair enzyme involved in the repair of deaminated bases. Selectively cleaves double-stranded DNA at the second phosphodiester bond 3' to a deoxyinosine leaving behind the intact lesion on the nicked DNA. The chain is Endonuclease V from Salmonella enteritidis PT4 (strain P125109).